The following is a 394-amino-acid chain: Envelope glycoprotein D (394 aa).

A signal peptide spans 1–25 (MGGTAARLGAVILFVVIVGLHGVRG). The segment at 25 to 57 (GKYALADASLKMADPNRFRGKDLPVLDQLTDPP) is interaction with TNFRSF14. The Virion surface segment spans residues 26-339 (KYALADASLK…PYHPPATPNN (314 aa)). His-64 is a Zn(2+) binding site. 3 disulfides stabilise this stretch: Cys-91-Cys-214, Cys-131-Cys-227, and Cys-143-Cys-152. N-linked (GlcNAc...) asparagine; by host glycans are attached at residues Asn-119 and Asn-146. Asp-240 is a binding site for Zn(2+). The tract at residues 261–305 (LKIAGWHGPKAPYTSTLLPPELSETPNATQPELAPEDPEDSALLE) is profusion. The interval 275–301 (STLLPPELSETPNATQPELAPEDPEDS) is disordered. N-linked (GlcNAc...) asparagine; by host glycosylation occurs at Asn-287. A helical membrane pass occupies residues 340 to 364 (MGLIAGAVGGSLLAALVICGIVYWM). The Intravirion portion of the chain corresponds to 365 to 394 (HRRTRKAPKRIRLPHIREDDQPSSHQPLFY).

This sequence belongs to the herpesviridae glycoprotein D family. Homodimer. Interacts with host receptor TNFRSF14. Interacts with host receptor NECTIN1. Interacts (via profusion domain) with gB; this interaction occurs in the absence of gH/gL. Interacts (via profusion domain) with gH/gL heterodimer; this interaction occurs in the absence of gB. Associates with the gB-gH/gL-gD complex. Interacts (via C-terminus) with UL11 tegument protein. Interacts with host RSAD2.

The protein localises to the virion membrane. The protein resides in the host Golgi apparatus. In terms of biological role, envelope glycoprotein that binds to the host cell entry receptors NECTIN1, TNFRSF14/HVEM and 3-O-sulfated heparan sulfate, promoting the virus entry into host cells. May trigger fusion with host membrane, by recruiting the fusion machinery composed of gB and gH/gL. This Human herpesvirus 1 (strain Patton) (HHV-1) protein is Envelope glycoprotein D (gD).